We begin with the raw amino-acid sequence, 317 residues long: Aspartate carbamoyltransferase catalytic subunit (317 aa).

2 residues coordinate carbamoyl phosphate: Arg65 and Thr66. Residue Lys93 coordinates L-aspartate. Residues Arg115, His145, and Gln148 each contribute to the carbamoyl phosphate site. L-aspartate contacts are provided by Arg178 and Arg233. Positions 274 and 275 each coordinate carbamoyl phosphate.

The protein belongs to the aspartate/ornithine carbamoyltransferase superfamily. ATCase family. In terms of assembly, heterododecamer (2C3:3R2) of six catalytic PyrB chains organized as two trimers (C3), and six regulatory PyrI chains organized as three dimers (R2).

The enzyme catalyses carbamoyl phosphate + L-aspartate = N-carbamoyl-L-aspartate + phosphate + H(+). It participates in pyrimidine metabolism; UMP biosynthesis via de novo pathway; (S)-dihydroorotate from bicarbonate: step 2/3. Functionally, catalyzes the condensation of carbamoyl phosphate and aspartate to form carbamoyl aspartate and inorganic phosphate, the committed step in the de novo pyrimidine nucleotide biosynthesis pathway. This is Aspartate carbamoyltransferase catalytic subunit from Bordetella parapertussis (strain 12822 / ATCC BAA-587 / NCTC 13253).